We begin with the raw amino-acid sequence, 475 residues long: MSPQTETKASVGFKAGVKDYKLTYYTPDYETKDTDILAAFRVTPQPGVPPEEAGAAVAAESSTGTWTTVWTDGLTSLDRYKGRCYHIEPVAGDENQYICYVAYPLDLFEEGSVTNMFTSIVGNVFGFKALRALRLEDLRIPPSYTKTFQGPPHGIQVERDKLNKYGRPLLGCTIKPKLGLSAKNYGRAVYECLRGGLDFTKDDENVNSQPFMRWRDRFLFCAEAIFKSQAETGEIKGHYLNATAGTCEEMMKRAVFARELGVPIVMHDYLTGGFTANTSLAHYCRDNGLLLHIHRAMHAVIDRQKNHGIHFRVLAKALRMSGGDHIHAGTVVGKLEGERDITLGFVDLLRDDFIEKDRSRGIYFTQDWVSLPGVLPVASGGIHVWHMPALTEIFGDDSVLQFGGGTLGHPWGNAPGAVANRVALEACVQARNEGRDLAREGNEIIREASKWSPELAAACEVWKEIKFEFEAMDTL.

A propeptide spanning residues 1–2 is cleaved from the precursor; that stretch reads MS. Position 3 is an N-acetylproline (Pro3). An N6,N6,N6-trimethyllysine modification is found at Lys14. Substrate is bound by residues Asn123 and Thr173. Residue Lys175 is the Proton acceptor of the active site. Residue Lys177 coordinates substrate. Mg(2+) is bound by residues Lys201, Asp203, and Glu204. Lys201 is modified (N6-carboxylysine). The active-site Proton acceptor is His294. Substrate contacts are provided by Arg295, His327, and Ser379.

It belongs to the RuBisCO large chain family. Type I subfamily. As to quaternary structure, heterohexadecamer of 8 large chains and 8 small chains; disulfide-linked. The disulfide link is formed within the large subunit homodimers. Mg(2+) is required as a cofactor. The disulfide bond which can form in the large chain dimeric partners within the hexadecamer appears to be associated with oxidative stress and protein turnover.

It localises to the plastid. The protein resides in the chloroplast. The catalysed reaction is 2 (2R)-3-phosphoglycerate + 2 H(+) = D-ribulose 1,5-bisphosphate + CO2 + H2O. It carries out the reaction D-ribulose 1,5-bisphosphate + O2 = 2-phosphoglycolate + (2R)-3-phosphoglycerate + 2 H(+). RuBisCO catalyzes two reactions: the carboxylation of D-ribulose 1,5-bisphosphate, the primary event in carbon dioxide fixation, as well as the oxidative fragmentation of the pentose substrate in the photorespiration process. Both reactions occur simultaneously and in competition at the same active site. The polypeptide is Ribulose bisphosphate carboxylase large chain (Eucalyptus globulus subsp. globulus (Tasmanian blue gum)).